The chain runs to 362 residues: HLA class I histocompatibility antigen, B alpha chain (362 aa).

An N-terminal signal peptide occupies residues 1 to 24; it reads MLVMAPRTVLLLLSAALALTETWA. Residues 3 to 11 form a VL9 epitope region; it reads VMAPRTVLL. An alpha-1 region spans residues 25 to 114; it reads GSHSMRYFYT…LRGYYNQSEA (90 aa). The Extracellular portion of the chain corresponds to 25-309; the sequence is GSHSMRYFYT…PSSQSTVPIV (285 aa). Asn-87 contributes to the a peptide antigen binding site. The short motif at 101–107 is the Bw6 motif element; that stretch reads SLRNLRG. Position 108 (Tyr-108) interacts with a peptide antigen. Asn-110 carries an N-linked (GlcNAc...) asparagine glycan. The segment at 115-206 is alpha-2; sequence GSHTLQSMYG…ENGKDKLERA (92 aa). A disulfide bridge links Cys-125 with Cys-188. Residues Thr-167, Lys-170, Glu-176, Tyr-183, and Tyr-195 each coordinate a peptide antigen. The alpha-3 stretch occupies residues 207–298; it reads DPPKTHVTHH…GLPKPLTLRW (92 aa). Positions 209–295 constitute an Ig-like C1-type domain; sequence PKTHVTHHPI…QHEGLPKPLT (87 aa). A disulfide bridge links Cys-227 with Cys-283. Residues 299–309 are connecting peptide; sequence EPSSQSTVPIV. A helical transmembrane segment spans residues 310-333; it reads GIVAGLAVLAVVVIGAVVAAVMCR. Residues 334-362 are Cytoplasmic-facing; that stretch reads RKSSGGKGGSYSQAACSDSAQGSDVSLTA. Residues 337-362 form a disordered region; it reads SGGKGGSYSQAACSDSAQGSDVSLTA. A compositionally biased stretch (polar residues) spans 346 to 362; the sequence is QAACSDSAQGSDVSLTA.

In terms of assembly, heterotrimer that consists of an alpha chain HLA-B, a beta chain B2M and a peptide (peptide-HLA-B-B2M). Early in biogenesis, HLA-B-B2M dimer interacts with the components of the peptide-loading complex composed of TAPBP, TAP1-TAP2, TAPBPL, PDIA3/ERP57 and CALR. Interacts with TAP1-TAP2 transporter via TAPBP; this interaction is obligatory for the loading of peptide epitopes delivered to the ER by TAP1-TAP2 transporter. Interacts with TAPBPL; TAPBPL binds peptide-free HLA-B-B2M complexes or those loaded with low affinity peptides, likely facilitating peptide exchange for higher affinity peptides. Only optimally assembled peptide-HLA-B-B2M trimer translocates to the surface of antigen-presenting cells, where it interacts with TCR and CD8 coreceptor on the surface of T cells. HLA-B (via polymorphic alpha-1 and alpha-2 domains) interacts with antigen-specific TCR (via CDR1, CDR2 and CDR3 domains). One HLA-B molecule (mainly via nonpolymorphic alpha-3 domain) interacts with one CD8A homodimer (via CDR-like loop); this interaction ensures peptide-HLA-B-B2M recognition by CD8-positive T cells only. Allele B*57:01 interacts (via Bw4 motif) with KIR3DL1 (via Ig-like C2-type domain); this interaction may interfere with peptide binding. Allele B*46:01 interacts with KIR2DL3. As to quaternary structure, (Microbial infection) Interacts with HTLV-1 accessory protein p12I.

The protein resides in the cell membrane. The protein localises to the endoplasmic reticulum membrane. Its function is as follows. Antigen-presenting major histocompatibility complex class I (MHCI) molecule. In complex with B2M/beta 2 microglobulin displays primarily viral and tumor-derived peptides on antigen-presenting cells for recognition by alpha-beta T cell receptor (TCR) on HLA-B-restricted CD8-positive T cells, guiding antigen-specific T cell immune response to eliminate infected or transformed cells. May also present self-peptides derived from the signal sequence of secreted or membrane proteins, although T cells specific for these peptides are usually inactivated to prevent autoreactivity. Both the peptide and the MHC molecule are recognized by TCR, the peptide is responsible for the fine specificity of antigen recognition and MHC residues account for the MHC restriction of T cells. Typically presents intracellular peptide antigens of 8 to 13 amino acids that arise from cytosolic proteolysis via constitutive proteasome and IFNG-induced immunoproteasome. Can bind different peptides containing allele-specific binding motifs, which are mainly defined by anchor residues at position 2 and 9. In terms of biological role, allele B*07:02: Displays peptides sharing a common signature motif, namely a Pro residue at position 2 and mainly a Leu anchor residue at the C-terminus. Presents a long peptide (APRGPHGGAASGL) derived from the cancer-testis antigen CTAG1A/NY-ESO-1, eliciting a polyclonal CD8-positive T cell response against tumor cells. Presents viral epitopes derived from HIV-1 gag-pol (TPQDLNTML) and Nef (RPQVPLRPM). Presents an immunodominant epitope derived from SARS-CoV-2 N/nucleoprotein (SPRWYFYYL). Displays self-peptides including a peptide derived from the signal sequence of HLA-DPB1 (APRTVALTA). Functionally, allele B*08:01: Presents to CD8-positive T cells viral epitopes derived from EBV/HHV-4 EBNA3 (QAKWRLQTL), eliciting cytotoxic T cell response. Allele B*13:02: Presents multiple HIV-1 epitopes derived from gag (RQANFLGKI, GQMREPRGSDI), nef (RQDILDLWI), gag-pol (RQYDQILIE, GQGQWTYQI) and rev (LQLPPLERL), all having in common a Gln residue at position 2 and mainly hydrophobic amino acids Leu, Ile or Val at the C-terminus. Associated with successful control of HIV-1 infection. Its function is as follows. Allele B*18:01: Preferentially presents octomeric and nonameric peptides sharing a common motif, namely a Glu at position 2 and Phe or Tyr anchor residues at the C-terminus. Presents an EBV/HHV-4 epitope derived from BZLF1 (SELEIKRY). May present to CD8-positive T cells an antigenic peptide derived from MAGEA3 (MEVDPIGHLY), triggering an anti-tumor immune response. May display a broad repertoire of self-peptides with a preference for peptides derived from RNA-binding proteins. In terms of biological role, allele B*27:05: Presents to CD8-positive T cells immunodominant viral epitopes derived from HCV POLG (ARMILMTHF), HIV-1 gag (KRWIILGLNK), IAV NP (SRYWAIRTR), SARS-CoV-2 N/nucleoprotein (QRNAPRITF), EBV/HHV-4 EBNA4 (HRCQAIRKK) and EBV/HHV-4 EBNA6 (RRIYDLIEL), conferring longterm protection against viral infection. Can present self-peptides derived from cytosolic and nuclear proteins. All peptides carry an Arg at position 2. The peptide-bound form interacts with NK cell inhibitory receptor KIR3DL1 and inhibits NK cell activation in a peptide-specific way, being particularly sensitive to the nature of the amino acid side chain at position 8 of the antigenic peptide. KIR3DL1 fails to recognize HLA-B*27:05 in complex with B2M and EBV/HHV-4 EBNA6 (RRIYDLIEL) peptide, which can lead to increased activation of NK cells during infection. May present an altered repertoire of peptides in the absence of TAP1-TAP2 and TAPBPL. Functionally, allele B*40:01: Presents immunodominant viral epitopes derived from EBV/HHV-4 LMP2 (IEDPPFNSL) and SARS-CoV-2 N/nucleoprotein (MEVTPSGTWL), triggering memory CD8-positive T cell response. Displays self-peptides sharing a signature motif, namely a Glu at position 2 and a Leu anchor residue at the C-terminus. Allele B*41:01: Displays self-peptides sharing a signature motif, namely a Glu at position 2 and Ala or Pro anchor residues at the C-terminus. Its function is as follows. Allele B*44:02: Presents immunodominant viral epitopes derived from EBV/HHV-4 EBNA4 (VEITPYKPTW) and EBNA6 (AEGGVGWRHW, EENLLDFVRF), triggering memory CD8-positive T cell response. Displays self-peptides sharing a signature motif, namely a Glu at position 2 and Phe, Tyr or Trp anchor residues at the C-terminus. In terms of biological role, allele B*45:01: Displays self-peptides sharing a signature motif, namely a Glu at position 2 and Ala or Pro anchor residues at the C-terminus. Functionally, allele B*46:01: Preferentially presents nonameric peptides sharing a signature motif, namely Ala and Leu at position 2 and Tyr, Phe, Leu, or Met anchor residues at the C-terminus. The peptide-bound form interacts with KIR2DL3 and inhibits NK cell cytotoxic response in a peptide-specific way. Allele B*47:01: Displays self-peptides sharing a signature motif, namely an Asp at position 2 and Leu or Met anchor residues at the C-terminus. Its function is as follows. Allele B*49:01: Displays self-peptides sharing a signature motif, namely a Glu at position 2 and Ile or Val anchor residues at the C-terminus. In terms of biological role, allele B*50:01: Displays self-peptides sharing a signature motif, namely a Glu at position 2 and Ala or Pro anchor residues at the C-terminus. Functionally, allele B*51:01: Presents an octomeric HIV-1 epitope derived from gag-pol (TAFTIPSI) to the public TRAV17/TRBV7-3 TCR clonotype, strongly suppressing HIV-1 replication. Allele B*54:01: Displays peptides sharing a common signature motif, namely a Pro residue at position 2 and Ala anchor residue at the C-terminus. Its function is as follows. Allele B*55:01: Displays peptides sharing a common signature motif, namely a Pro residue at position 2 and Ala anchor residue at the C-terminus. In terms of biological role, allele B*56:01: Displays peptides sharing a common signature motif, namely a Pro residue at position 2 and Ala anchor residue at the C-terminus. Functionally, allele B*57:01: The peptide-bound form recognizes KIR3DL1 and inhibits NK cell cytotoxic response. Presents HIV gag peptides (immunodominant KAFSPEVIPMF and subdominant KALGPAATL epitopes) predominantly to CD8-positive T cell clones expressing a TRAV41-containing TCR, triggering HLA-B-restricted T cell responses. Allele B*67:01: Displays peptides sharing a common signature motif, namely a Pro residue at position 2 and Leu anchor residue at the C-terminus. The chain is HLA class I histocompatibility antigen, B alpha chain from Homo sapiens (Human).